The chain runs to 1067 residues: Zinc finger MIZ domain-containing protein 1 (1067 aa).

The tract at residues methionine 1–proline 120 is sufficient for transactivation activity; sufficient for interaction with NOTCH1. Residue lysine 91 forms a Glycyl lysine isopeptide (Lys-Gly) (interchain with G-Cter in SUMO2) linkage. 2 disordered regions span residues glutamine 112–histidine 141 and asparagine 327–proline 542. A compositionally biased stretch (low complexity) spans proline 128–histidine 141. The span at tyrosine 413–glycine 429 shows a compositional bias: polar residues. The span at tyrosine 431 to leucine 440 shows a compositional bias: pro residues. Residues asparagine 479–arginine 497 show a composition bias toward low complexity. Pro residues predominate over residues serine 510–threonine 521. An SP-RING-type zinc finger spans residues glycine 727 to histidine 808. Residues cysteine 758, histidine 760, cysteine 781, and cysteine 784 each coordinate Zn(2+). Residues lysine 834 and lysine 843 each participate in a glycyl lysine isopeptide (Lys-Gly) (interchain with G-Cter in SUMO2) cross-link. Positions proline 837–asparagine 1067 are transactivation domain. The segment covering glycine 868–glycine 879 has biased composition (pro residues). Residues glycine 868–asparagine 1067 are disordered. 2 stretches are compositionally biased toward polar residues: residues threonine 881–glycine 895 and serine 951–glutamine 961. Over residues alanine 981–alanine 996 the composition is skewed to pro residues. The span at proline 1040–asparagine 1067 shows a compositional bias: low complexity.

In terms of assembly, interacts with AR, but not with ESR1, NR3C1, PGR, THRB nor VDR. Interacts with NOTCH1 and RBPJ. Interacts with SMARCA4. Interacts (via SP-RING-type domain) with SMAD3 and SMAD4 (via MH2 domain). In terms of tissue distribution, expressed most abundantly in ovary and, at lower levels, in prostate, spleen and testis. Weak expression, if any, in thymus, small intestine, colon and peripheral blood leukocytes.

It is found in the nucleus. Its subcellular location is the nucleoplasm. It localises to the cytoplasm. Functionally, acts as a transcriptional coactivator. Increases ligand-dependent transcriptional activity of AR and promotes AR sumoylation. The stimulation of AR activity is dependent upon sumoylation. Also functions as a transcriptional coactivator in the TGF-beta signaling pathway by increasing the activity of the SMAD3/SMAD4 transcriptional complex. Involved in transcriptional activation of a subset of NOTCH1 target genes including MYC. Involved in thymocyte and T cell development. Involved in the regulation of postmitotic positioning of pyramidal neurons in the developing cerebral cortex. The protein is Zinc finger MIZ domain-containing protein 1 of Homo sapiens (Human).